Here is a 217-residue protein sequence, read N- to C-terminus: UPF0319 protein HSM_0266 (217 aa).

Positions 1–21 (MKFSFAALASAMLLTSTAAFA) are cleaved as a signal peptide.

This sequence belongs to the UPF0319 family.

The polypeptide is UPF0319 protein HSM_0266 (Histophilus somni (strain 2336) (Haemophilus somnus)).